Reading from the N-terminus, the 162-residue chain is Selenoprotein F (162 aa).

The first 28 residues, 1 to 28 (MAAGQGGWLRPALGLRLLLATAFQAVSA), serve as a signal peptide directing secretion. Position 93 (U93) is a non-standard amino acid, selenocysteine.

It belongs to the selenoprotein M/F family. Forms a tight complex with UGGT1/UGCGL1. Interacts with UGGT2/UGCGL2. Interacts with RDH11. Highest levels in prostate, lower levels in brain, lung, thyroid gland, and large intestine.

It is found in the endoplasmic reticulum lumen. Its function is as follows. May be involved in redox reactions associated with the formation of disulfide bonds. May contribute to the quality control of protein folding in the endoplasmic reticulum. May regulate protein folding by enhancing the catalytic activity of UGGT1/UGCGL1 and UGGT2/UGCGL2. The sequence is that of Selenoprotein F from Rattus norvegicus (Rat).